A 120-amino-acid polypeptide reads, in one-letter code: Large ribosomal subunit protein bL17 (120 aa).

The protein belongs to the bacterial ribosomal protein bL17 family. In terms of assembly, part of the 50S ribosomal subunit. Contacts protein L32.

In Bacillus cereus (strain ATCC 14579 / DSM 31 / CCUG 7414 / JCM 2152 / NBRC 15305 / NCIMB 9373 / NCTC 2599 / NRRL B-3711), this protein is Large ribosomal subunit protein bL17.